A 654-amino-acid polypeptide reads, in one-letter code: tRNA 5-methylaminomethyl-2-thiouridine biosynthesis bifunctional protein MnmC (654 aa).

Positions 1 to 236 (MPTLLQHAQI…KWEVMSGAYV (236 aa)) are tRNA (mnm(5)s(2)U34)-methyltransferase. The tract at residues 262–654 (IGAGLAGSSS…FGLRRLIRGK (393 aa)) is FAD-dependent cmnm(5)s(2)U34 oxidoreductase.

It in the N-terminal section; belongs to the methyltransferase superfamily. tRNA (mnm(5)s(2)U34)-methyltransferase family. The protein in the C-terminal section; belongs to the DAO family. The cofactor is FAD.

Its subcellular location is the cytoplasm. It carries out the reaction 5-aminomethyl-2-thiouridine(34) in tRNA + S-adenosyl-L-methionine = 5-methylaminomethyl-2-thiouridine(34) in tRNA + S-adenosyl-L-homocysteine + H(+). Catalyzes the last two steps in the biosynthesis of 5-methylaminomethyl-2-thiouridine (mnm(5)s(2)U) at the wobble position (U34) in tRNA. Catalyzes the FAD-dependent demodification of cmnm(5)s(2)U34 to nm(5)s(2)U34, followed by the transfer of a methyl group from S-adenosyl-L-methionine to nm(5)s(2)U34, to form mnm(5)s(2)U34. The chain is tRNA 5-methylaminomethyl-2-thiouridine biosynthesis bifunctional protein MnmC from Pseudomonas putida (strain ATCC 47054 / DSM 6125 / CFBP 8728 / NCIMB 11950 / KT2440).